Reading from the N-terminus, the 94-residue chain is UPF0381 protein YfcZ (94 aa).

The protein belongs to the UPF0381 family.

This Escherichia coli O6:H1 (strain CFT073 / ATCC 700928 / UPEC) protein is UPF0381 protein YfcZ (yfcZ).